The primary structure comprises 325 residues: NADH-quinone oxidoreductase subunit H (325 aa).

Helical transmembrane passes span 11-31 (ILISVLKAVVILLVVVTCGAF), 81-101 (AIFTLAPVIAFTSLLLSFAIV), 114-134 (IGILFFLMMAGLAVYAVLFAG), 154-174 (LSYEVFLGLSLMGVVAQAGSF), 186-206 (VWNVIPQFFGFVTFAIAGVAV), 237-257 (FFVGEYIGIVTVSALIVTLFF), 265-285 (LPPFIWFALKTAFFMVMFILI), and 304-324 (VCLPLTLLNLLATAAVILYNA).

It belongs to the complex I subunit 1 family. In terms of assembly, NDH-1 is composed of 13 different subunits. Subunits NuoA, H, J, K, L, M, N constitute the membrane sector of the complex.

The protein resides in the cell inner membrane. The enzyme catalyses a quinone + NADH + 5 H(+)(in) = a quinol + NAD(+) + 4 H(+)(out). In terms of biological role, NDH-1 shuttles electrons from NADH, via FMN and iron-sulfur (Fe-S) centers, to quinones in the respiratory chain. The immediate electron acceptor for the enzyme in this species is believed to be ubiquinone. Couples the redox reaction to proton translocation (for every two electrons transferred, four hydrogen ions are translocated across the cytoplasmic membrane), and thus conserves the redox energy in a proton gradient. This subunit may bind ubiquinone. This chain is NADH-quinone oxidoreductase subunit H, found in Yersinia enterocolitica serotype O:8 / biotype 1B (strain NCTC 13174 / 8081).